Consider the following 247-residue polypeptide: Suppressor of silencing P0 (247 aa).

In terms of domain architecture, F-box-like spans 76–95 (LPRHLHYECLEWGLLCGTHP).

This sequence belongs to the polerovirus P0 protein family.

Its function is as follows. Suppressor of RNA-mediated gene silencing, also known as post-transcriptional gene silencing (PTGS), a mechanism of plant viral defense that limits the accumulation of viral RNAs. The P0 protein suppresses local PTGS using its F-box-like domain to mediate destabilization and degradation of the AGO1 protein, although not via an interaction with host SKP1A. Participates, together with the proteins P1 and P7, in the inhibition of the induction of aphid-induced host phytohormones. This could play a role in the attraction to the infected plants by aphids. This is Suppressor of silencing P0 from Potato leafroll virus (strain Potato/Scotland/strain 1/1984) (PLrV).